The chain runs to 211 residues: Probable GTP-binding protein EngB (211 aa).

Residues 13 to 188 (SGYEIAFAGR…ASVMAGRLHF (176 aa)) form the EngB-type G domain. GTP is bound by residues 21–28 (GRSNAGKS), 48–52 (GRTQM), 67–70 (DLPG), 134–137 (TKAD), and 167–169 (FSS). Mg(2+)-binding residues include serine 28 and threonine 50.

The protein belongs to the TRAFAC class TrmE-Era-EngA-EngB-Septin-like GTPase superfamily. EngB GTPase family. Mg(2+) serves as cofactor.

Its function is as follows. Necessary for normal cell division and for the maintenance of normal septation. The polypeptide is Probable GTP-binding protein EngB (Acinetobacter baumannii (strain ATCC 17978 / DSM 105126 / CIP 53.77 / LMG 1025 / NCDC KC755 / 5377)).